The chain runs to 1316 residues: DNA-directed RNA polymerase subunit beta' (1316 aa).

Residues cysteine 60, cysteine 62, cysteine 75, and cysteine 78 each contribute to the Zn(2+) site. The Mg(2+) site is built by aspartate 535, aspartate 537, and aspartate 539. Zn(2+)-binding residues include cysteine 891, cysteine 968, cysteine 975, and cysteine 978.

It belongs to the RNA polymerase beta' chain family. In terms of assembly, the RNAP catalytic core consists of 2 alpha, 1 beta, 1 beta' and 1 omega subunit. When a sigma factor is associated with the core the holoenzyme is formed, which can initiate transcription. Requires Mg(2+) as cofactor. Zn(2+) is required as a cofactor.

The catalysed reaction is RNA(n) + a ribonucleoside 5'-triphosphate = RNA(n+1) + diphosphate. Functionally, DNA-dependent RNA polymerase catalyzes the transcription of DNA into RNA using the four ribonucleoside triphosphates as substrates. The protein is DNA-directed RNA polymerase subunit beta' of Mycobacterium ulcerans (strain Agy99).